A 182-amino-acid chain; its full sequence is Photosystem I assembly protein Ycf4 (182 aa).

Helical transmembrane passes span 22–42 (WSSV…SSYL) and 63–83 (VMCF…LTIF).

Belongs to the Ycf4 family.

The protein resides in the plastid. The protein localises to the chloroplast thylakoid membrane. In terms of biological role, seems to be required for the assembly of the photosystem I complex. In Oltmannsiellopsis viridis (Marine flagellate), this protein is Photosystem I assembly protein Ycf4.